Consider the following 445-residue polypeptide: StAR-related lipid transfer protein 3 (445 aa).

The Cytoplasmic segment spans residues 1-51; sequence MSKLPGELARDLECSLPAVASLGSSLSHSQSLSSHLLPPPEKRRAISDVRR. An MENTAL domain is found at 46-217; it reads ISDVRRTFCL…YSPPESFAGS (172 aa). A helical transmembrane segment spans residues 52–72; the sequence is TFCLFVTFDLLFISLLWIIEL. Over 73 to 94 the chain is Extracellular; sequence NTNTGIRKNLEQEIIQYNFKTS. The helical transmembrane segment at 95 to 115 threads the bilayer; it reads FFDIFVLAFFRFSGLLLGYAV. Residues 116-120 are Cytoplasmic-facing; sequence LRLQH. A helical transmembrane segment spans residues 121–141; it reads WWVIAVTTLVSSAFLIVKVIL. Over 142 to 148 the chain is Extracellular; the sequence is SELLSKG. Residues 149–169 form a helical membrane-spanning segment; sequence AFGYLLPIVSFVLAWLETWFL. Residues 170-445 are Cytoplasmic-facing; it reads DFKVLPQEAE…QRISELGARA (276 aa). 2 consecutive short sequence motifs (FFAT) follow at residues 206-212 and 207-212; these read QFYSPPE and FYSPPE. A phosphoserine mark is found at S209, S217, and S221. In terms of domain architecture, START spans 248 to 443; the sequence is VVDQILAQEE…LRQRISELGA (196 aa).

It belongs to the STARD3 family. As to quaternary structure, homodimer. Interacts (via the MENTAL domain) with STARD3NL. Interacts (via phosphorylated FFAT motif) with VAPA (via MSP domain). Interacts (via phosphorylated FFAT motif) with VAPB (via MSP domain). Interacts (via phosphorylated FFAT motif) with MOSPD2 (via MSP domain); this interaction allows enrichment of MOSPD2 around endosomes. Post-translationally, phosphorylation at Ser-209 is necessary and sufficient for the direct interaction of the phosphorylated FFAT motif with the MSP domain of MOSPD2, VAPA and VAPB and allows the tethering of two membranes that participates in the formation of ER-endosome contacts. Phosphorylation of the FFAT motif leads to conformation changes. Additional phosphorylations around the core FFAT motif (QFYSPPE) are not essential but strengthen the interaction with MOSPD2, VAPA and VAPB. Phosphorylation at Ser-209 of FFAT motif drives membrane tethering between the endoplasmic reticulum and late endosomes via interaction with VAPA and VAPB that in turn allows the efficient transport of sterol mediated by the START domain. As to expression, present in retina. Localizes to all neurons of macular retina and especially cone inner segments and axons (at protein level).

The protein resides in the late endosome membrane. The catalysed reaction is cholesterol(in) = cholesterol(out). Its function is as follows. Sterol-binding protein that mediates cholesterol transport from the endoplasmic reticulum to endosomes. The sterol transport mechanism is triggered by phosphorylation of FFAT motif that leads to membrane tethering between the endoplasmic reticulum and late endosomes via interaction with VAPA and VAPB. Acts as a lipid transfer protein that redirects sterol to the endosome at the expense of the cell membrane and favors membrane formation inside endosomes. May also mediate cholesterol transport between other membranes, such as mitochondria membrane or cell membrane. However, such results need additional experimental evidences; probably mainly mediates cholesterol transport from the endoplasmic reticulum to endosomes. Does not activate transcriptional cholesterol sensing. Able to bind other lipids, such as lutein, a xanthophyll carotenoids that form the macular pigment of the retina. Able to bind other lipids, such as lutein, a xanthophyll carotenoids that form the macular pigment of the retina. In Macaca mulatta (Rhesus macaque), this protein is StAR-related lipid transfer protein 3.